The chain runs to 1424 residues: Serine/threonine-protein kinase LMTK3 (1424 aa).

An N-terminal signal peptide occupies residues 1-20 (MPAPGALILLAAVSASGCLA). A helical transmembrane segment spans residues 40 to 60 (AVVLISCSGLLAFIFLLLTCL). The tract at residues 74-95 (NPEGEDCSGEYTPPAEETSSSQ) is disordered. The 279-residue stretch at 133-411 (LSYLQEIGSG…SDLQLQLTYL (279 aa)) folds into the Protein kinase domain. ATP is bound by residues 139–147 (IGSGWFGKV) and Lys164. Ser232 carries the post-translational modification Phosphoserine. Asp266 serves as the catalytic Proton acceptor. 2 disordered regions span residues 413–465 (SERP…PDDV) and 486–516 (RGAGRGGGAPPWQPASAPPAPHTNPSNPFYE). Residues 418-439 (RPPPPPPPPRDGPFPWPWPPSH) are compositionally biased toward pro residues. Residue Arg490 is modified to Omega-N-methylarginine. The span at 496-507 (PWQPASAPPAPH) shows a compositional bias: pro residues. Ser531 and Ser535 each carry phosphoserine. Disordered stretches follow at residues 544-666 (EHGS…PLPC), 680-964 (LERG…MSPE), 976-1024 (MSPK…APET), 1041-1313 (GLEM…RKRK), and 1325-1424 (LFDQ…PVEN). Polar residues predominate over residues 571–584 (QTPSEVPQLVSETW). The span at 638–647 (AEEEEEESSP) shows a compositional bias: acidic residues. Residues 700-713 (PPEDDSSLRAERGS) show a composition bias toward basic and acidic residues. Positions 744 to 758 (RGPPPAPPPPPPPPR) are enriched in pro residues. Positions 759–791 (ASAEPAASPDPPSALASPGSGLSSPGPKPGDSG) are enriched in low complexity. The span at 818 to 841 (PRAPPEPPDPGAPRPPPDPGPLPL) shows a compositional bias: pro residues. The span at 935–954 (DMKEKVAENGLESPEKEERA) shows a compositional bias: basic and acidic residues. Phosphoserine is present on residues Ser947, Ser962, and Ser977. Residues 994–1004 (RNTERPPEIGP) are compositionally biased toward basic and acidic residues. Residues 1084 to 1094 (GSGGRALGGVG) are compositionally biased toward gly residues. Residues 1095–1105 (TAPAGGPASAV) show a composition bias toward low complexity. The span at 1167 to 1177 (DPLKPERKGPE) shows a compositional bias: basic and acidic residues. Low complexity predominate over residues 1200–1213 (SRLSLALPPLTLTP). The segment covering 1231–1241 (AAGGEAGGAGA) has biased composition (gly residues). Residues 1245–1261 (AEEDGEDEDEDEEDEEA) show a composition bias toward acidic residues. Over residues 1262–1272 (AGSRDPGRTRE) the composition is skewed to basic and acidic residues. Polar residues predominate over residues 1329-1339 (ETPTNELSVQG). Residues 1348-1360 (STPPAPPTPPHPT) are compositionally biased toward pro residues.

The protein belongs to the protein kinase superfamily. Tyr protein kinase family. As to quaternary structure, interacts with ESR1. Interacts with AP-2 complex subunit alpha. Requires Mg(2+) as cofactor. Autophosphorylated. In terms of tissue distribution, expressed in brain. Predominantly expressed in cerebral cortex, thalamus, the cerebellum and hippocampal formation (at protein level).

It is found in the membrane. It localises to the cell projection. The protein resides in the axon. The protein localises to the dendrite. Its subcellular location is the golgi apparatus membrane. It catalyses the reaction L-seryl-[protein] + ATP = O-phospho-L-seryl-[protein] + ADP + H(+). The catalysed reaction is L-threonyl-[protein] + ATP = O-phospho-L-threonyl-[protein] + ADP + H(+). Protein kinase which phosphorylates ESR1 (in vitro) and protects it against proteasomal degradation. May also regulate ESR1 levels indirectly via a PKC-AKT-FOXO3 pathway where it decreases the activity of PKC and the phosphorylation of AKT, thereby increasing binding of transcriptional activator FOXO3 to the ESR1 promoter and increasing ESR1 transcription. Involved in endocytic trafficking of N-methyl-D-aspartate receptors (NMDAR) in neurons. The polypeptide is Serine/threonine-protein kinase LMTK3 (Lmtk3) (Mus musculus (Mouse)).